Consider the following 126-residue polypeptide: Lymphocyte antigen 6 complex locus protein G6c (126 aa).

The N-terminal stretch at 1–19 (MKHLLLLTLSALLYCWVSA) is a signal peptide. A UPAR/Ly6 domain is found at 21 to 112 (TRCHSCYKVP…PRPTPALALI (92 aa)). 3 cysteine pairs are disulfide-bonded: C23/C48, C26/C34, and C40/C66. N89 carries an N-linked (GlcNAc...) (high mannose) asparagine glycan. C93 and C98 are disulfide-bonded. The GPI-anchor amidated serine moiety is linked to residue S100. A propeptide spans 101–126 (PAPRPTPALALISLTSLAGLGLWLLH) (removed in mature form).

As to quaternary structure, monomer. Post-translationally, N-glycosylated. In terms of tissue distribution, highly expressed at the leading edges of cells, on filopodia.

Its subcellular location is the cell membrane. In Mus musculus (Mouse), this protein is Lymphocyte antigen 6 complex locus protein G6c (Ly6g6c).